The sequence spans 198 residues: Nucleoside triphosphate pyrophosphatase (198 aa).

Catalysis depends on Asp-74, which acts as the Proton acceptor.

This sequence belongs to the Maf family. A divalent metal cation serves as cofactor.

The protein localises to the cytoplasm. The enzyme catalyses a ribonucleoside 5'-triphosphate + H2O = a ribonucleoside 5'-phosphate + diphosphate + H(+). It carries out the reaction a 2'-deoxyribonucleoside 5'-triphosphate + H2O = a 2'-deoxyribonucleoside 5'-phosphate + diphosphate + H(+). Functionally, nucleoside triphosphate pyrophosphatase. May have a dual role in cell division arrest and in preventing the incorporation of modified nucleotides into cellular nucleic acids. The chain is Nucleoside triphosphate pyrophosphatase from Sphingopyxis alaskensis (strain DSM 13593 / LMG 18877 / RB2256) (Sphingomonas alaskensis).